Reading from the N-terminus, the 403-residue chain is Prostaglandin D2 receptor 2 (403 aa).

At 1–34 (MANITLKPLCPLLEEMVQLPNHSNSSLRYIDHVS) the chain is on the extracellular side. 3 N-linked (GlcNAc...) asparagine glycosylation sites follow: asparagine 3, asparagine 21, and asparagine 24. The helical transmembrane segment at 35–55 (VLLHGLASLLGLVENGLILFV) threads the bilayer. Residues 56 to 71 (VGCRMRQTVVTTWVLH) are Cytoplasmic-facing. Residues 72 to 92 (LALSDLLAAASLPFFTYFLAV) form a helical membrane-spanning segment. The Extracellular segment spans residues 93–104 (GHSWELGTTFCK). The cysteines at positions 103 and 198 are disulfide-linked. A helical transmembrane segment spans residues 105–125 (LHSSVFFLNMFASGFLLSAIS). The Cytoplasmic portion of the chain corresponds to 126 to 147 (LDRCLQVVRPVWAQNHRTVAAA). A helical transmembrane segment spans residues 148–168 (HRVCLMLWALAVLNTVPYFVF). Topologically, residues 169 to 209 (RDTIPRRDGRIMCYYNMLLLNPGSDRDTTCDYRQKALAVSK) are extracellular. The chain crosses the membrane as a helical span at residues 210-230 (FLLAFMVPLAIIASSHVAVSL). The Cytoplasmic portion of the chain corresponds to 231 to 245 (QLHHRGRQRTGRFVR). Residues 246 to 266 (LVAAIVVAFILCWGPYHIFSL) form a helical membrane-spanning segment. Topologically, residues 267–284 (LEARAHSVTTLRQLASRG) are extracellular. Residues 285–305 (LPFVTSLAFFNSVVNPLLYVL) traverse the membrane as a helical segment. Topologically, residues 306 to 403 (TCPDMLHKLR…KQGSLSCTLD (98 aa)) are cytoplasmic. The Involved in the recycling of CRTH2 motif lies at 329-332 (DSDL). Serine 330 carries the phosphoserine modification. Disordered regions lie at residues 332 to 353 (LSTG…STTT) and 384 to 403 (PRRV…CTLD). Residues 338–348 (KRCRRRHRRRA) show a composition bias toward basic residues. Serine 349 is subject to Phosphoserine. Positions 393–403 (EKQGSLSCTLD) are enriched in polar residues.

Belongs to the G-protein coupled receptor 1 family. In terms of processing, phosphorylated.

The protein localises to the cell membrane. Its function is as follows. Receptor for prostaglandin D2 (PGD2). Coupled to the G(i)-protein. Receptor activation may result in pertussis toxin-sensitive decreases in cAMP levels and Ca(2+) mobilization. PI3K signaling is also implicated in mediating PTGDR2 effects. PGD2 induced receptor internalization. CRTH2 internalization can be regulated by diverse kinases such as, PKC, PKA, GRK2, GPRK5/GRK5 and GRK6. Receptor activation is responsible, at least in part, in immune regulation and allergic/inflammation responses. In Rattus norvegicus (Rat), this protein is Prostaglandin D2 receptor 2 (Ptgdr2).